The chain runs to 382 residues: Lipid-A-disaccharide synthase (382 aa).

The protein belongs to the LpxB family.

It carries out the reaction 2-N,3-O-bis[(3R)-3-hydroxytetradecanoyl]-alpha-D-glucosaminyl 1-phosphate + UDP-2-N,3-O-bis[(3R)-3-hydroxytetradecanoyl]-alpha-D-glucosamine = lipid A disaccharide (E. coli) + UDP + H(+). It catalyses the reaction a lipid X + a UDP-2-N,3-O-bis[(3R)-3-hydroxyacyl]-alpha-D-glucosamine = a lipid A disaccharide + UDP + H(+). Its pathway is glycolipid biosynthesis; lipid IV(A) biosynthesis; lipid IV(A) from (3R)-3-hydroxytetradecanoyl-[acyl-carrier-protein] and UDP-N-acetyl-alpha-D-glucosamine: step 5/6. Functionally, condensation of UDP-2,3-diacylglucosamine and 2,3-diacylglucosamine-1-phosphate to form lipid A disaccharide, a precursor of lipid A, a phosphorylated glycolipid that anchors the lipopolysaccharide to the outer membrane of the cell. The polypeptide is Lipid-A-disaccharide synthase (Escherichia coli (strain K12 / MC4100 / BW2952)).